A 178-amino-acid chain; its full sequence is Acireductone dioxygenase 1 (178 aa).

Residues histidine 84, histidine 86, glutamate 90, and histidine 130 each coordinate Fe(2+). Positions 84, 86, 90, and 130 each coordinate Ni(2+).

The protein belongs to the acireductone dioxygenase (ARD) family. The cofactor is Fe(2+). It depends on Ni(2+) as a cofactor.

The protein resides in the cytoplasm. Its subcellular location is the nucleus. It catalyses the reaction 1,2-dihydroxy-5-(methylsulfanyl)pent-1-en-3-one + O2 = 4-methylsulfanyl-2-oxobutanoate + formate + 2 H(+). The catalysed reaction is 1,2-dihydroxy-5-(methylsulfanyl)pent-1-en-3-one + O2 = 3-(methylsulfanyl)propanoate + CO + formate + 2 H(+). Its pathway is amino-acid biosynthesis; L-methionine biosynthesis via salvage pathway; L-methionine from S-methyl-5-thio-alpha-D-ribose 1-phosphate: step 5/6. In terms of biological role, catalyzes 2 different reactions between oxygen and the acireductone 1,2-dihydroxy-3-keto-5-methylthiopentene (DHK-MTPene) depending upon the metal bound in the active site. Fe-containing acireductone dioxygenase (Fe-ARD) produces formate and 2-keto-4-methylthiobutyrate (KMTB), the alpha-ketoacid precursor of methionine in the methionine recycle pathway. Ni-containing acireductone dioxygenase (Ni-ARD) produces methylthiopropionate, carbon monoxide and formate, and does not lie on the methionine recycle pathway. In Coprinopsis cinerea (strain Okayama-7 / 130 / ATCC MYA-4618 / FGSC 9003) (Inky cap fungus), this protein is Acireductone dioxygenase 1.